The sequence spans 545 residues: ATP synthase subunit alpha (545 aa).

172 to 179 (GDRKTGKT) contributes to the ATP binding site.

Belongs to the ATPase alpha/beta chains family. In terms of assembly, F-type ATPases have 2 components, CF(1) - the catalytic core - and CF(0) - the membrane proton channel. CF(1) has five subunits: alpha(3), beta(3), gamma(1), delta(1), epsilon(1). CF(0) has three main subunits: a(1), b(2) and c(9-12). The alpha and beta chains form an alternating ring which encloses part of the gamma chain. CF(1) is attached to CF(0) by a central stalk formed by the gamma and epsilon chains, while a peripheral stalk is formed by the delta and b chains.

It localises to the cell membrane. It catalyses the reaction ATP + H2O + 4 H(+)(in) = ADP + phosphate + 5 H(+)(out). Functionally, produces ATP from ADP in the presence of a proton gradient across the membrane. The alpha chain is a regulatory subunit. The chain is ATP synthase subunit alpha from Corynebacterium urealyticum (strain ATCC 43042 / DSM 7109).